A 148-amino-acid polypeptide reads, in one-letter code: Nucleoside diphosphate kinase B (148 aa).

6 residues coordinate ATP: lysine 9, phenylalanine 57, arginine 85, threonine 91, arginine 102, and asparagine 112. Catalysis depends on histidine 115, which acts as the Pros-phosphohistidine intermediate.

The protein belongs to the NDK family. Requires Mg(2+) as cofactor.

It catalyses the reaction a 2'-deoxyribonucleoside 5'-diphosphate + ATP = a 2'-deoxyribonucleoside 5'-triphosphate + ADP. The catalysed reaction is a ribonucleoside 5'-diphosphate + ATP = a ribonucleoside 5'-triphosphate + ADP. In terms of biological role, major role in the synthesis of nucleoside triphosphates other than ATP. The ATP gamma phosphate is transferred to the NDP beta phosphate via a ping-pong mechanism, using a phosphorylated active-site intermediate. The chain is Nucleoside diphosphate kinase B from Flaveria bidentis (Coastal plain yellowtops).